The primary structure comprises 352 residues: Phosphate acyltransferase (352 aa).

This sequence belongs to the PlsX family. In terms of assembly, homodimer. Probably interacts with PlsY.

It is found in the cytoplasm. The catalysed reaction is a fatty acyl-[ACP] + phosphate = an acyl phosphate + holo-[ACP]. The protein operates within lipid metabolism; phospholipid metabolism. Catalyzes the reversible formation of acyl-phosphate (acyl-PO(4)) from acyl-[acyl-carrier-protein] (acyl-ACP). This enzyme utilizes acyl-ACP as fatty acyl donor, but not acyl-CoA. In Brucella anthropi (strain ATCC 49188 / DSM 6882 / CCUG 24695 / JCM 21032 / LMG 3331 / NBRC 15819 / NCTC 12168 / Alc 37) (Ochrobactrum anthropi), this protein is Phosphate acyltransferase.